The sequence spans 1013 residues: 2-oxoglutarate dehydrogenase, mitochondrial (1013 aa).

The N-terminal 39 residues, 1 to 39 (MFTLKQVINKSIQTSMKNGVMSSAVKRSFSTVGGINQPK), are a transit peptide targeting the mitochondrion. Arg-302, Asp-403, Asn-436, Ile-438, and Gln-664 together coordinate thiamine diphosphate. Mg(2+) is bound by residues Asp-403, Asn-436, and Ile-438.

The protein belongs to the alpha-ketoglutarate dehydrogenase family. In terms of assembly, homodimer. Component of the 2-oxoglutarate dehydrogenase complex. Thiamine diphosphate is required as a cofactor. It depends on Mg(2+) as a cofactor.

Its subcellular location is the mitochondrion matrix. The catalysed reaction is N(6)-[(R)-lipoyl]-L-lysyl-[protein] + 2-oxoglutarate + H(+) = N(6)-[(R)-S(8)-succinyldihydrolipoyl]-L-lysyl-[protein] + CO2. Its function is as follows. The 2-oxoglutarate dehydrogenase complex catalyzes the overall conversion of 2-oxoglutarate to succinyl-CoA and CO(2). It contains multiple copies of three enzymatic components: 2-oxoglutarate dehydrogenase (E1), dihydrolipoamide succinyltransferase (E2) and lipoamide dehydrogenase (E3). In Dictyostelium discoideum (Social amoeba), this protein is 2-oxoglutarate dehydrogenase, mitochondrial (ogdh).